Reading from the N-terminus, the 74-residue chain is uncharacterized protein (74 aa).

The helical transmembrane segment at Ile-20–Ile-40 threads the bilayer.

The protein belongs to the asfivirus KP93L family.

It localises to the host membrane. This is an uncharacterized protein from African swine fever virus (isolate Tick/South Africa/Pretoriuskop Pr4/1996) (ASFV).